The following is a 452-amino-acid chain: Maltoporin (452 aa).

An N-terminal signal peptide occupies residues 1-25 (MMITLRKLPLAVAVAAGVMSAQAMA).

Belongs to the porin LamB (TC 1.B.3) family. As to quaternary structure, homotrimer formed of three 18-stranded antiparallel beta-barrels, containing three independent channels.

The protein localises to the cell outer membrane. The enzyme catalyses beta-maltose(in) = beta-maltose(out). In terms of biological role, involved in the transport of maltose and maltodextrins. In Salmonella heidelberg (strain SL476), this protein is Maltoporin.